We begin with the raw amino-acid sequence, 232 residues long: Small ribosomal subunit protein uS2 (232 aa).

It belongs to the universal ribosomal protein uS2 family.

The chain is Small ribosomal subunit protein uS2 from Natranaerobius thermophilus (strain ATCC BAA-1301 / DSM 18059 / JW/NM-WN-LF).